The primary structure comprises 427 residues: Adenylosuccinate synthetase (427 aa).

Residues 12–18 and 40–42 contribute to the GTP site; these read GDEGKGK and GHT. The active-site Proton acceptor is the Asp-13. Mg(2+) contacts are provided by Asp-13 and Gly-40. Residues 13–16, 38–41, Thr-128, Arg-142, Gln-223, Thr-238, and Arg-302 each bind IMP; these read DEGK and NAGH. His-41 functions as the Proton donor in the catalytic mechanism. 298–304 is a binding site for substrate; sequence TTTGRPR. Residues Arg-304, 330-332, and 412-414 contribute to the GTP site; these read SID and SVG.

Belongs to the adenylosuccinate synthetase family. In terms of assembly, homodimer. Requires Mg(2+) as cofactor.

Its subcellular location is the cytoplasm. It carries out the reaction IMP + L-aspartate + GTP = N(6)-(1,2-dicarboxyethyl)-AMP + GDP + phosphate + 2 H(+). Its pathway is purine metabolism; AMP biosynthesis via de novo pathway; AMP from IMP: step 1/2. Functionally, plays an important role in the de novo pathway of purine nucleotide biosynthesis. Catalyzes the first committed step in the biosynthesis of AMP from IMP. The protein is Adenylosuccinate synthetase of Staphylococcus aureus (strain N315).